We begin with the raw amino-acid sequence, 312 residues long: Putative S-adenosyl-L-methionine-dependent methyltransferase Mjls_0078 (312 aa).

Residues Asp-134 and 163-164 contribute to the S-adenosyl-L-methionine site; that span reads DL.

It belongs to the UPF0677 family.

In terms of biological role, exhibits S-adenosyl-L-methionine-dependent methyltransferase activity. The protein is Putative S-adenosyl-L-methionine-dependent methyltransferase Mjls_0078 of Mycobacterium sp. (strain JLS).